A 293-amino-acid chain; its full sequence is C-type lectin domain family 4 member G (293 aa).

Over 1–31 the chain is Cytoplasmic; it reads MDTTRYSKWGGSSEEVPGGPWGRWVHWSRRP. Ser12 carries the phosphoserine modification. A helical; Signal-anchor for type II membrane protein membrane pass occupies residues 32 to 52; sequence LFLALAVLVTTVLWAVILSIL. Residues 53-293 lie on the Extracellular side of the membrane; the sequence is LSKASTERAA…GWICEKRHNC (241 aa). A glycan (N-linked (GlcNAc...) asparagine) is linked at Asn73. A coiled-coil region spans residues 96-136; sequence SGTQAQLQTTRAELGEAQAKLMEQESALRELRERVTQGLAE. Asn159 is a glycosylation site (N-linked (GlcNAc...) asparagine). A C-type lectin domain is found at 172 to 287; sequence FEGSCYFFSV…CDSEKDGWIC (116 aa). The cysteines at positions 264 and 278 are disulfide-linked.

As to quaternary structure, (Microbial infection) Interacts with Japanese encephalitis virus envelope protein E. (Microbial infection) Interacts with ebolavirus glycoprotein. In terms of assembly, (Microbial infection) Interacts with SARS-CoV spike glycoprotein. As to quaternary structure, (Microbial infection) Interacts with lassa virus and Lymphocytic choriomeningitis virus glycoprotein. As to expression, expressed exclusively in fetal and adult liver and in lymph nodes. Specifically expressed by endothelial cells lining lymph node and liver sinuses (at protein level).

The protein resides in the cell membrane. Functionally, binds mannose, N-acetylglucosamine (GlcNAc) and fucose, but not galactose, in a Ca(2+)-dependent manner, in vitro. (Microbial infection) Acts as a receptor for Japanese encephalitis virus. In terms of biological role, (Microbial infection) Acts as a receptor for Ebolavirus. Its function is as follows. (Microbial infection) Acts as a receptor for SARS-CoV. Functionally, (Microbial infection) Acts as a receptor for Lassa virus and Lymphocytic choriomeningitis virus glycoprotein. In Homo sapiens (Human), this protein is C-type lectin domain family 4 member G (CLEC4G).